The chain runs to 208 residues: MTLADPALPRPRLILASASPRRFDLLSGAGLSPDAVEPTHIDEHEIPGELPGPLALRLAQEKAMAHPGSDDAFILAADTVVGVGRRILPKTETEAEARRCLDLLSGRNHRVFTGIAARGPDNRFAARVVETRVKFKRLSQPEIDAYIASGEWRGKAGGYAIQGRAGCFVINLIGSFTGVVGLPLYETANLLTGLGYPVTARMGEGGSA.

Residue aspartate 78 is the Proton acceptor of the active site.

This sequence belongs to the Maf family. YhdE subfamily. A divalent metal cation serves as cofactor.

Its subcellular location is the cytoplasm. It carries out the reaction dTTP + H2O = dTMP + diphosphate + H(+). The enzyme catalyses UTP + H2O = UMP + diphosphate + H(+). Functionally, nucleoside triphosphate pyrophosphatase that hydrolyzes dTTP and UTP. May have a dual role in cell division arrest and in preventing the incorporation of modified nucleotides into cellular nucleic acids. The protein is dTTP/UTP pyrophosphatase of Maricaulis maris (strain MCS10) (Caulobacter maris).